The primary structure comprises 744 residues: 5-methyltetrahydropteroyltriglutamate--homocysteine methyltransferase (744 aa).

Residues 17 to 20 (REVK) and lysine 110 contribute to the 5-methyltetrahydropteroyltri-L-glutamate site. Residues 422–424 (IGS) and glutamate 475 contribute to the L-homocysteine site. Residues 422-424 (IGS) and glutamate 475 each bind L-methionine. Residue tryptophan 552 coordinates 5-methyltetrahydropteroyltri-L-glutamate. Aspartate 590 is an L-homocysteine binding site. Position 590 (aspartate 590) interacts with L-methionine. A 5-methyltetrahydropteroyltri-L-glutamate-binding site is contributed by glutamate 596. Residues histidine 632, cysteine 634, and glutamate 656 each contribute to the Zn(2+) site. Residue histidine 685 is the Proton donor of the active site. Position 717 (cysteine 717) interacts with Zn(2+).

It belongs to the vitamin-B12 independent methionine synthase family. The cofactor is Zn(2+).

It carries out the reaction 5-methyltetrahydropteroyltri-L-glutamate + L-homocysteine = tetrahydropteroyltri-L-glutamate + L-methionine. It participates in amino-acid biosynthesis; L-methionine biosynthesis via de novo pathway; L-methionine from L-homocysteine (MetE route): step 1/1. Catalyzes the transfer of a methyl group from 5-methyltetrahydrofolate to homocysteine resulting in methionine formation. This Trichodesmium erythraeum (strain IMS101) protein is 5-methyltetrahydropteroyltriglutamate--homocysteine methyltransferase.